The following is a 208-amino-acid chain: MLFTQLIILLTVTSQALSVTISDLNNIASNQVTKRLGGGSRGGSSSGSRGGSSSGSSSGSSSGSRGGSSSGSSSSGSRGGGSGSSSSSGSRNWGSNQYHCSGNSCGYGNYYAPSTAAAAVGYGTGRYTGGTQYGNNQYHCSGSTCGYGNYFAPSAAAAAAGYGSARYYAQHHNSTSSESETISGSSSLNIPSTHFYLIGFAAAYSIVL.

An N-terminal signal peptide occupies residues 1–18 (MLFTQLIILLTVTSQALS). The tract at residues 33–93 (TKRLGGGSRG…SSSSSGSRNW (61 aa)) is disordered. Residues 36–53 (LGGGSRGGSSSGSRGGSS) are compositionally biased toward gly residues. Positions 54–63 (SGSSSGSSSG) are enriched in low complexity. A glycan (N-linked (GlcNAc...) asparagine) is linked at asparagine 173. Residue serine 185 is the site of GPI-anchor amidated serine attachment. Positions 186–208 (SSLNIPSTHFYLIGFAAAYSIVL) are cleaved as a propeptide — removed in mature form.

This sequence belongs to the PGA37 family.

It localises to the cell membrane. In terms of biological role, predicted GPI-anchored protein which may have a role during host infection. The polypeptide is Predicted GPI-anchored protein 37 (PGA37) (Candida albicans (strain SC5314 / ATCC MYA-2876) (Yeast)).